Consider the following 501-residue polypeptide: NADH-quinone oxidoreductase subunit N (501 aa).

A run of 14 helical transmembrane segments spans residues 4–24 (HLPI…RLLV), 34–54 (FVLA…AETL), 80–100 (LAGG…VYAG), 112–132 (GSFY…CATG), 134–154 (LFNL…LIAF), 167–187 (LIIG…LYAM), 207–227 (PVVI…MALF), 241–261 (PAPV…YALY), 278–298 (LQVL…MAIA), 314–334 (VGYI…GALL), 335–355 (HVLS…GVSW), 376–396 (MGAF…LGFF), 409–429 (GAWV…VYFF), and 463–483 (PASM…LGLF).

Belongs to the complex I subunit 2 family. In terms of assembly, NDH-1 is composed of 14 different subunits. Subunits NuoA, H, J, K, L, M, N constitute the membrane sector of the complex.

It localises to the cell membrane. It catalyses the reaction a quinone + NADH + 5 H(+)(in) = a quinol + NAD(+) + 4 H(+)(out). Functionally, NDH-1 shuttles electrons from NADH, via FMN and iron-sulfur (Fe-S) centers, to quinones in the respiratory chain. The immediate electron acceptor for the enzyme in this species is believed to be a menaquinone. Couples the redox reaction to proton translocation (for every two electrons transferred, four hydrogen ions are translocated across the cytoplasmic membrane), and thus conserves the redox energy in a proton gradient. In Desulforudis audaxviator (strain MP104C), this protein is NADH-quinone oxidoreductase subunit N.